The chain runs to 149 residues: MDQQAQPQFQIQKVYVKDLSFSIPNSDKIWTTNWKPELHTDLKVEATKLPEENTYETVLTLEVKVENDGMVAFEAEVKQAGIFTVANMQEAQIEHAKKAFCPNILYHYAREAISDLVISGGFPQLCLSAVNFDAMYQDSLKESADSKQH.

Belongs to the SecB family. Homotetramer, a dimer of dimers. One homotetramer interacts with 1 SecA dimer.

Its subcellular location is the cytoplasm. Functionally, one of the proteins required for the normal export of preproteins out of the cell cytoplasm. It is a molecular chaperone that binds to a subset of precursor proteins, maintaining them in a translocation-competent state. It also specifically binds to its receptor SecA. This Francisella tularensis subsp. tularensis (strain FSC 198) protein is Protein-export protein SecB 2.